Consider the following 167-residue polypeptide: Large ribosomal subunit protein bL9 (167 aa).

This sequence belongs to the bacterial ribosomal protein bL9 family.

Its function is as follows. Binds to the 23S rRNA. This Nitratidesulfovibrio vulgaris (strain ATCC 29579 / DSM 644 / CCUG 34227 / NCIMB 8303 / VKM B-1760 / Hildenborough) (Desulfovibrio vulgaris) protein is Large ribosomal subunit protein bL9.